A 449-amino-acid chain; its full sequence is Elongation factor 1-alpha (449 aa).

The 226-residue stretch at 5 to 230 folds into the tr-type G domain; that stretch reads KVHINIVVIG…DQIQEPKRPS (226 aa). Positions 14–21 are G1; it reads GHVDSGKS. 14–21 serves as a coordination point for GTP; that stretch reads GHVDSGKS. An N6,N6-dimethyllysine modification is found at K55. The tract at residues 70 to 74 is G2; sequence GITID. Residue K79 is modified to N6,N6,N6-trimethyllysine. Residues 91–94 are G3; it reads DAPG. GTP contacts are provided by residues 91–95 and 153–156; these read DAPGH and NKMD. The tract at residues 153–156 is G4; the sequence is NKMD. An N6,N6,N6-trimethyllysine modification is found at K187. Residues 194 to 196 form a G5 region; it reads SGF. K261 is modified (N6-methyllysine). At E289 the chain carries 5-glutamyl glycerylphosphorylethanolamine. N6,N6,N6-trimethyllysine is present on K306. At E362 the chain carries 5-glutamyl glycerylphosphorylethanolamine. K396 is subject to N6,N6,N6-trimethyllysine.

It belongs to the TRAFAC class translation factor GTPase superfamily. Classic translation factor GTPase family. EF-Tu/EF-1A subfamily.

It is found in the cytoplasm. Functionally, this protein promotes the GTP-dependent binding of aminoacyl-tRNA to the A-site of ribosomes during protein biosynthesis. In Manihot esculenta (Cassava), this protein is Elongation factor 1-alpha (EF1).